Consider the following 189-residue polypeptide: Probable UbiX-like flavin prenyltransferase (189 aa).

Residues 9–11 (GAS), Ser36, 87–90 (SMKT), and Arg122 contribute to the FMN site.

This sequence belongs to the UbiX/PAD1 family. YclB subfamily. As to quaternary structure, homododecamer.

The catalysed reaction is dimethylallyl phosphate + FMNH2 = prenylated FMNH2 + phosphate. Its function is as follows. Involved in the non-oxidative decarboxylation and detoxification of phenolic derivatives under anaerobic conditions. Flavin prenyltransferase that catalyzes the synthesis of the prenylated FMN cofactor (prenyl-FMN) for phenolic acid decarboxylase. This chain is Probable UbiX-like flavin prenyltransferase, found in Sedimentibacter hydroxybenzoicus (Clostridium hydroxybenzoicum).